The following is a 470-amino-acid chain: Sorting nexin-17 (470 aa).

In terms of domain architecture, PX spans 1 to 109; sequence MHFSIPETES…SFLRRAQQET (109 aa). A 1,2-diacyl-sn-glycero-3-phospho-(1D-myo-inositol-3-phosphate) is bound by residues Arg-36, Ser-38, Lys-62, and Arg-75. The region spanning 115 to 206 is the Ras-associating domain; the sequence is EEVSLEVLLS…YKIVLRKSYW (92 aa). Residues 115-432 form an FERM-like region; it reads EEVSLEVLLS…DASRESMVKL (318 aa). The interval 270-432 is PTB-like F3 module; sequence GYLRFDACVA…DASRESMVKL (163 aa). Residues 401-425 form a disordered region; it reads GGNLRRSDSQQAVKSPPLLESPDAS. 6 positions are modified to phosphoserine: Ser-407, Ser-409, Ser-415, Ser-421, Ser-437, and Ser-440.

Belongs to the sorting nexin family. As to quaternary structure, monomer. Interacts with APP (via cytoplasmic YXNPXY motif). Interacts with KIF1B. Interacts with the C-termini of P-selectin, PTC, LDLR, VLDLR, LRP1 and LRP8. Interacts with KRIT1 (via N-terminus). Interacts with HRAS. Interacts with ITGB1 and ITGB5 (via NPxY motif). Interacts with CCDC22 and CCDC93; the interaction associates SNX17 with the CCC complex. Interacts (via C-terminus) with VPS26C and VPS35L; the interactions are direct and associate SNX17 with the retriever complex.

It localises to the cytoplasm. The protein localises to the early endosome. It is found in the cytoplasmic vesicle membrane. Its function is as follows. Critical regulator of endosomal recycling of numerous surface proteins, including integrins, signaling receptor and channels. Binds to NPxY sequences in the cytoplasmic tails of target cargos. Associates with retriever and CCC complexes to prevent lysosomal degradation and promote cell surface recycling of numerous cargos such as integrins ITGB1, ITGB5 and their associated alpha subunits. Also required for maintenance of normal cell surface levels of APP and LRP1. Interacts with membranes containing phosphatidylinositol 3-phosphate (PtdIns(3P)). The polypeptide is Sorting nexin-17 (Snx17) (Rattus norvegicus (Rat)).